A 214-amino-acid polypeptide reads, in one-letter code: GTP-binding protein ypt3 (214 aa).

Residue Gly17–Ser24 participates in GTP binding. An Effector region motif is present at residues Ser39–Phe47. Phosphothreonine is present on Thr42. GTP is bound by residues Asp65–Gln69 and Asn123–Asp126. Residues Cys213 and Cys214 are each lipidated (S-geranylgeranyl cysteine).

The protein belongs to the small GTPase superfamily. Rab family.

The protein localises to the cell membrane. It is found in the endosome membrane. It localises to the golgi apparatus membrane. The protein resides in the cytoplasm. Its subcellular location is the nucleus. Its function is as follows. Has a role in retrograde traffricking of proteins from the endosome to the Golgi. Involved in the secretory pathway where it has a role in acid phosphatase secretion. The polypeptide is GTP-binding protein ypt3 (ypt3) (Schizosaccharomyces pombe (strain 972 / ATCC 24843) (Fission yeast)).